The primary structure comprises 33 residues: Photosystem II reaction center protein Psb30 (33 aa).

Residues 8–28 form a helical membrane-spanning segment; it reads QLTALAFIVLSGPLVIALLAF.

It belongs to the Psb30/Ycf12 family. PSII is composed of 1 copy each of membrane proteins PsbA, PsbB, PsbC, PsbD, PsbE, PsbF, PsbH, PsbI, PsbJ, PsbK, PsbL, PsbM, PsbT, PsbX, PsbY, PsbZ, Psb30/Ycf12, peripheral proteins of the oxygen-evolving complex and a large number of cofactors. It forms dimeric complexes.

The protein resides in the plastid. It localises to the chloroplast thylakoid membrane. Functionally, a core subunit of photosystem II (PSII), probably helps stabilize the reaction center. The protein is Photosystem II reaction center protein Psb30 of Staurastrum punctulatum (Green alga).